The primary structure comprises 170 residues: Peptide deformylase (170 aa).

Residues C91 and H133 each contribute to the Fe cation site. E134 is a catalytic residue. Position 137 (H137) interacts with Fe cation.

The protein belongs to the polypeptide deformylase family. It depends on Fe(2+) as a cofactor.

It catalyses the reaction N-terminal N-formyl-L-methionyl-[peptide] + H2O = N-terminal L-methionyl-[peptide] + formate. Functionally, removes the formyl group from the N-terminal Met of newly synthesized proteins. Requires at least a dipeptide for an efficient rate of reaction. N-terminal L-methionine is a prerequisite for activity but the enzyme has broad specificity at other positions. The protein is Peptide deformylase of Aeromonas salmonicida (strain A449).